The primary structure comprises 418 residues: Serine hydroxymethyltransferase (418 aa).

(6S)-5,6,7,8-tetrahydrofolate contacts are provided by residues Leu121 and 125–127 (GHL). Lys230 carries the N6-(pyridoxal phosphate)lysine modification. Residue 356 to 358 (SPF) participates in (6S)-5,6,7,8-tetrahydrofolate binding.

The protein belongs to the SHMT family. As to quaternary structure, homodimer. The cofactor is pyridoxal 5'-phosphate.

It localises to the cytoplasm. The enzyme catalyses (6R)-5,10-methylene-5,6,7,8-tetrahydrofolate + glycine + H2O = (6S)-5,6,7,8-tetrahydrofolate + L-serine. Its pathway is one-carbon metabolism; tetrahydrofolate interconversion. It participates in amino-acid biosynthesis; glycine biosynthesis; glycine from L-serine: step 1/1. Catalyzes the reversible interconversion of serine and glycine with tetrahydrofolate (THF) serving as the one-carbon carrier. This reaction serves as the major source of one-carbon groups required for the biosynthesis of purines, thymidylate, methionine, and other important biomolecules. Also exhibits THF-independent aldolase activity toward beta-hydroxyamino acids, producing glycine and aldehydes, via a retro-aldol mechanism. The polypeptide is Serine hydroxymethyltransferase (Shewanella piezotolerans (strain WP3 / JCM 13877)).